Consider the following 451-residue polypeptide: UDP-N-acetylmuramoylalanine--D-glutamate ligase (451 aa).

119–125 contributes to the ATP binding site; sequence GSNGKTT.

Belongs to the MurCDEF family.

The protein localises to the cytoplasm. The enzyme catalyses UDP-N-acetyl-alpha-D-muramoyl-L-alanine + D-glutamate + ATP = UDP-N-acetyl-alpha-D-muramoyl-L-alanyl-D-glutamate + ADP + phosphate + H(+). The protein operates within cell wall biogenesis; peptidoglycan biosynthesis. Functionally, cell wall formation. Catalyzes the addition of glutamate to the nucleotide precursor UDP-N-acetylmuramoyl-L-alanine (UMA). The sequence is that of UDP-N-acetylmuramoylalanine--D-glutamate ligase from Geobacillus kaustophilus (strain HTA426).